The chain runs to 443 residues: 3-isopropylmalate dehydratase large subunit (443 aa).

Cys347, Cys407, and Cys410 together coordinate [4Fe-4S] cluster.

Belongs to the aconitase/IPM isomerase family. LeuC type 1 subfamily. Heterodimer of LeuC and LeuD. It depends on [4Fe-4S] cluster as a cofactor.

The catalysed reaction is (2R,3S)-3-isopropylmalate = (2S)-2-isopropylmalate. It functions in the pathway amino-acid biosynthesis; L-leucine biosynthesis; L-leucine from 3-methyl-2-oxobutanoate: step 2/4. Its function is as follows. Catalyzes the isomerization between 2-isopropylmalate and 3-isopropylmalate, via the formation of 2-isopropylmaleate. The chain is 3-isopropylmalate dehydratase large subunit from Buchnera aphidicola subsp. Uroleucon aeneum.